Consider the following 720-residue polypeptide: DNA replication licensing factor mcm7-A (720 aa).

Residues 183–210 (CDQCGAETYQPIQSPTFMPLIMCPSREC) form a C4-type zinc finger. In terms of domain architecture, MCM spans 331–537 (FYEKLAASIA…NDLRLAQHIT (207 aa)). Tyrosine 344, glycine 383, alanine 385, lysine 386, serine 387, asparagine 488, arginine 513, and arginine 603 together coordinate ATP. The Arginine finger motif lies at 512–515 (SRFD).

This sequence belongs to the MCM family. Component of the mcm2-7 complex (RLF-M). The complex forms a toroidal hexameric ring with the proposed subunit order mcm2-mcm6-mcm4-mcm7-mcm3-mcm5. The heterodimer of mmcm3/mcm5 interacts with mcm4, mmcm6, mcm7 and weakly with mcm2. The N-terminus is required for interaction with mmcm3, though this interaction may not be direct, and remains in a complex with mmcm3 throughout the cell cycle. Begins to associate with zmcm6 at the neurula stage. Component of the replisome complex. Component of the CMG helicase complex, composed of the mcm2-7 complex, the GINS complex and cdc45. In terms of processing, ubiquitinated by traip when forks converge following formation of DNA interstrand cross-links. Ubiquitinated via 'Lys-6'- and 'Lys-63'-linked polyubiquitination by traip. Short ubiquitin chains on mcm7 promote recruitment of DNA glycosylase neil3. If the interstrand cross-link cannot be cleaved by neil3, the ubiquitin chains continue to grow on mcm7, promoting the unloading of the CMG helicase complex by the vcp/p97 ATPase.

Its subcellular location is the nucleus. It localises to the chromosome. The enzyme catalyses ATP + H2O = ADP + phosphate + H(+). Functionally, acts as a component of the mcm2-7 complex (mcm complex) which is the putative replicative helicase essential for 'once per cell cycle' DNA replication initiation and elongation in eukaryotic cells. The active ATPase sites in the mcm2-7 ring are formed through the interaction surfaces of two neighboring subunits such that a critical structure of a conserved arginine finger motif is provided in trans relative to the ATP-binding site of the Walker A box of the adjacent subunit. The six ATPase active sites, however, are likely to contribute differentially to the complex helicase activity. The existence of maternal and zygotic forms of mcm3 and mcm6 suggests that specific forms of mcm2-7 complexes may be used during different stages of development. This is DNA replication licensing factor mcm7-A (mcm7-a) from Xenopus laevis (African clawed frog).